Reading from the N-terminus, the 335-residue chain is tRNA-splicing endonuclease (335 aa).

Residues Y269, H280, and K311 contribute to the active site.

This sequence belongs to the tRNA-intron endonuclease family. Archaeal long subfamily. Homodimer.

It catalyses the reaction pretRNA = a 3'-half-tRNA molecule with a 5'-OH end + a 5'-half-tRNA molecule with a 2',3'-cyclic phosphate end + an intron with a 2',3'-cyclic phosphate and a 5'-hydroxyl terminus.. Its function is as follows. Endonuclease that removes tRNA introns. Cleaves pre-tRNA at the 5'- and 3'-splice sites to release the intron. The products are an intron and two tRNA half-molecules bearing 2',3' cyclic phosphate and 5'-OH termini. Recognizes a pseudosymmetric substrate in which 2 bulged loops of 3 bases are separated by a stem of 4 bp. This is tRNA-splicing endonuclease from Haloarcula marismortui (strain ATCC 43049 / DSM 3752 / JCM 8966 / VKM B-1809) (Halobacterium marismortui).